A 119-amino-acid chain; its full sequence is Ribonuclease P protein component (119 aa).

Belongs to the RnpA family. In terms of assembly, consists of a catalytic RNA component (M1 or rnpB) and a protein subunit.

The catalysed reaction is Endonucleolytic cleavage of RNA, removing 5'-extranucleotides from tRNA precursor.. Functionally, RNaseP catalyzes the removal of the 5'-leader sequence from pre-tRNA to produce the mature 5'-terminus. It can also cleave other RNA substrates such as 4.5S RNA. The protein component plays an auxiliary but essential role in vivo by binding to the 5'-leader sequence and broadening the substrate specificity of the ribozyme. In Salmonella schwarzengrund (strain CVM19633), this protein is Ribonuclease P protein component.